Reading from the N-terminus, the 540-residue chain is NEDD8-activating enzyme E1 regulatory subunit AXR1 (540 aa).

The protein belongs to the ubiquitin-activating E1 family. ULA1 subfamily. As to quaternary structure, heterodimer of ECR1 and AXR1. The complex binds to RUB1/NEDD8 and RCE1. Expressed in shoot, root and floral meristems, in vascular tissues of cotyledons and mature leaves, and in the stele of the root. Expressed at higher levels on the lower side of an emerging root during germination and at higher levels on the underside of the apical hook.

Its subcellular location is the nucleus. It participates in protein modification; protein neddylation. Its function is as follows. Regulatory subunit of the dimeric ECR1-AXR1 E1 enzyme. E1 activates RUB1/NEDD8 by first adenylating its C-terminal glycine residue with ATP, thereafter linking this residue to the side chain of the catalytic cysteine, yielding a RUB1-ECR1 thioester and free AMP. E1 finally transfers RUB1 to the catalytic cysteine of RCE1. Plays an important role in auxin response. Regulates the chromosomal localization of meiotic recombination by crossovers (COs) and subsequent synapsis, probably through the activation of a CRL4 complex. Required for E3-mediated protein degradation in response to auxin, jasmonic acid and cold stress. Required for the COP1-COP10-CSN-mediated repression of photomorphogenesis in the dark. May function redundantly with AXL1 in the RUB conjugating pathway. Seems not to be functionally equivalent to AXL1 in vivo. The chain is NEDD8-activating enzyme E1 regulatory subunit AXR1 from Arabidopsis thaliana (Mouse-ear cress).